The following is a 717-amino-acid chain: Segment polarity protein dishevelled homolog DVL-3 (717 aa).

The DIX domain maps to 1–82 (MGETKVIYHL…RVVCWLVSAD (82 aa)). A disordered region spans residues 89 to 235 (GSVCADIQSD…PQIERSSSFS (147 aa)). Over residues 118 to 127 (HPNTRGSQEN) the composition is skewed to polar residues. Basic and acidic residues predominate over residues 140–155 (ARRERPGRKETSEHAT). Residues 173–189 (ESSSTLMSSELDSTSFF) are compositionally biased toward low complexity. Over residues 199–210 (RFSNSTEQSSAS) the composition is skewed to polar residues. The span at 212-224 (LMRRHKRRRRKPK) shows a compositional bias: basic residues. Positions 248-333 (TVTLNMEKYN…KPGPITLTVA (86 aa)) constitute a PDZ domain. The DEP domain occupies 421-495 (SESGLEVRDR…SEQCYYIFGD (75 aa)). Positions 552–653 (PDPAYIYGGG…THQSFGPPGI (102 aa)) are disordered. The segment covering 564-579 (GSQHSEGSRSSGSNRS) has biased composition (low complexity). Composition is skewed to basic and acidic residues over residues 580 to 593 (STEK…KGGD) and 602 to 618 (ESDH…RAAS). Positions 629-645 (HRSHHSIAHSIRSHHTH) are enriched in basic residues.

This sequence belongs to the DSH family. In terms of tissue distribution, expressed throughout the epidermis.

It localises to the cytoplasm. Functionally, involved in the signal transduction pathway mediated by multiple Wnt genes. Required during ciliogenesis for the docking of basal bodies to the apical plasma membrane. This Xenopus laevis (African clawed frog) protein is Segment polarity protein dishevelled homolog DVL-3.